We begin with the raw amino-acid sequence, 367 residues long: UDP-N-acetylglucosamine--N-acetylmuramyl-(pentapeptide) pyrophosphoryl-undecaprenol N-acetylglucosamine transferase (367 aa).

UDP-N-acetyl-alpha-D-glucosamine is bound by residues 15-17, N127, R163, S191, I249, and Q294; that span reads TGG.

The protein belongs to the glycosyltransferase 28 family. MurG subfamily.

The protein resides in the cell inner membrane. The catalysed reaction is di-trans,octa-cis-undecaprenyl diphospho-N-acetyl-alpha-D-muramoyl-L-alanyl-D-glutamyl-meso-2,6-diaminopimeloyl-D-alanyl-D-alanine + UDP-N-acetyl-alpha-D-glucosamine = di-trans,octa-cis-undecaprenyl diphospho-[N-acetyl-alpha-D-glucosaminyl-(1-&gt;4)]-N-acetyl-alpha-D-muramoyl-L-alanyl-D-glutamyl-meso-2,6-diaminopimeloyl-D-alanyl-D-alanine + UDP + H(+). Its pathway is cell wall biogenesis; peptidoglycan biosynthesis. Functionally, cell wall formation. Catalyzes the transfer of a GlcNAc subunit on undecaprenyl-pyrophosphoryl-MurNAc-pentapeptide (lipid intermediate I) to form undecaprenyl-pyrophosphoryl-MurNAc-(pentapeptide)GlcNAc (lipid intermediate II). The sequence is that of UDP-N-acetylglucosamine--N-acetylmuramyl-(pentapeptide) pyrophosphoryl-undecaprenol N-acetylglucosamine transferase from Burkholderia pseudomallei (strain 1106a).